Here is a 399-residue protein sequence, read N- to C-terminus: Bone morphogenetic protein 8A (399 aa).

A signal peptide spans 1–19 (MAMRPGPLWLLGLALCALG). Residues 20-260 (GGHGPRPPHT…ASQSPVRAPR (241 aa)) constitute a propeptide that is removed on maturation. Asparagine 155 carries N-linked (GlcNAc...) asparagine glycosylation. Residues 257-286 (RAPRAARPLKRRQPKKTNELPHPNKLPGIF) are disordered. Disulfide bonds link cysteine 298/cysteine 364, cysteine 327/cysteine 396, and cysteine 331/cysteine 398. Asparagine 340 is a glycosylation site (N-linked (GlcNAc...) asparagine).

This sequence belongs to the TGF-beta family. In terms of assembly, homodimer; disulfide-linked. In terms of tissue distribution, expressed in testis. expressed in trophoblast cells of the labyrinthine region of the placenta and in the inner root sheath of hair follicles of early postnatal skin. Expressed predominantly in the neonatal mouse spermatogonia.

Its subcellular location is the secreted. Growth factor of the TGF-beta superfamily that plays important role in various biological processes, including spermatogenesis, osteogenesis, steroidogenesis as well as regulation of energy balance. Initiates the canonical BMP signaling cascade by associating with type I receptor BMPR1A and type II receptor BMPR2. Once all three components are bound together in a complex at the cell surface, BMPR2 phosphorylates and activates BMPR1A. In turn, BMPR1A propagates signal by phosphorylating SMAD1/5/8 that travel to the nucleus and act as activators and repressors of transcription of target genes. In addition, activates the SMAD2/3 pathway. The protein is Bone morphogenetic protein 8A (Bmp8a) of Mus musculus (Mouse).